The following is a 277-amino-acid chain: MPNITNNHTFNIVQLSDLHLTGDIGQAPSYQRFLAVFQTAKHLNPDLWLLTGDLVNDGNSDAYDWLFNQLQATKIPYLAVAGNHDVTHEIGIHLAHQERIHVPILPDRRLKNCFRYTFQAGHDWQILLLNSSVSGEIFGLLTHETLLWLDQTLTTHFEQTIIALHHHPTKVSSDWIDAHLLKNHQDFWHVIKKHAHVHTILCGHVHQVHTLHPLPAHQVQLLSCPSTDRQFMPFVDNFQIADTPAGCRMIQIDNKGIVSSYIQIVQNTHSFCLNNAN.

Residues Asp-17, His-19, Asp-53, Asn-83, His-165, His-204, and His-206 each coordinate Fe cation. AMP-binding positions include His-19, Asp-53, and 83–84 (NH). His-206 is an AMP binding site.

Belongs to the cyclic nucleotide phosphodiesterase class-III family. Fe(2+) is required as a cofactor.

This Moraxella catarrhalis (strain BBH18) protein is Probable cyclic nucleotide phosphodiesterase MCR_0369.